The sequence spans 359 residues: DNA polymerase IV (359 aa).

The UmuC domain occupies 4–184 (IVHVDMDAFY…LKVNRIPGVG (181 aa)). Mg(2+) is bound by residues D8 and D102. E103 is a catalytic residue.

It belongs to the DNA polymerase type-Y family. Monomer. It depends on Mg(2+) as a cofactor.

The protein localises to the cytoplasm. It carries out the reaction DNA(n) + a 2'-deoxyribonucleoside 5'-triphosphate = DNA(n+1) + diphosphate. Its function is as follows. Poorly processive, error-prone DNA polymerase involved in untargeted mutagenesis. Copies undamaged DNA at stalled replication forks, which arise in vivo from mismatched or misaligned primer ends. These misaligned primers can be extended by PolIV. Exhibits no 3'-5' exonuclease (proofreading) activity. May be involved in translesional synthesis, in conjunction with the beta clamp from PolIII. This chain is DNA polymerase IV, found in Xanthomonas oryzae pv. oryzae (strain MAFF 311018).